A 140-amino-acid polypeptide reads, in one-letter code: Fluoride-specific ion channel FluC 1 (140 aa).

Transmembrane regions (helical) follow at residues 4–24 (LYLAVGGFCGAVGRYFLASFI), 32–52 (FPLATWIINLGGCLAMGFILT), 70–90 (TGMLGAFTTFSTFSVETLHLL), and 99–119 (LLYLFASLAGGLICMQTGIFL). Positions 74 and 77 each coordinate Na(+).

Belongs to the fluoride channel Fluc/FEX (TC 1.A.43) family.

Its subcellular location is the cell membrane. It catalyses the reaction fluoride(in) = fluoride(out). Na(+) is not transported, but it plays an essential structural role and its presence is essential for fluoride channel function. Functionally, fluoride-specific ion channel. Important for reducing fluoride concentration in the cell, thus reducing its toxicity. The polypeptide is Fluoride-specific ion channel FluC 1 (Moorella thermoacetica (strain ATCC 39073 / JCM 9320)).